Consider the following 5386-residue polypeptide: Nonribosomal peptide synthetase 2 (5386 aa).

The interval histidine 45 to valine 435 is adenylation 1. Positions serine 544–lysine 617 constitute a Carrier 1 domain. At serine 578 the chain carries O-(pantetheine 4'-phosphoryl)serine. The condensation 1 stretch occupies residues leucine 652–isoleucine 1059. Positions glutamate 1089 to arginine 1482 are adenylation 2. The Carrier 2 domain occupies glutamate 1611–serine 1688. Residue serine 1648 is modified to O-(pantetheine 4'-phosphoryl)serine. Positions isoleucine 1731–proline 2141 are condensation 2. Positions phenylalanine 2166–arginine 2551 are adenylation 3. Residues serine 2652–serine 2725 enclose the Carrier 3 domain. Serine 2686 is modified (O-(pantetheine 4'-phosphoryl)serine). A condensation 3 region spans residues arginine 2763–aspartate 3174. Positions glutamate 3202–arginine 3603 are adenylation 4. The Carrier 4 domain occupies glutamate 3728 to serine 3805. The residue at position 3765 (serine 3765) is an O-(pantetheine 4'-phosphoryl)serine. A condensation 4 region spans residues leucine 3846–alanine 4250. A Carrier 5 domain is found at phenylalanine 4281 to asparagine 4357. An O-(pantetheine 4'-phosphoryl)serine modification is found at serine 4318. The interval glutamate 4391–methionine 4802 is condensation 5. A disordered region spans residues histidine 4821 to threonine 4842. The Carrier 6 domain occupies threonine 4840–alanine 4913. At serine 4874 the chain carries O-(pantetheine 4'-phosphoryl)serine. The segment at glutamine 4952–aspartate 5257 is condensation 6.

The protein belongs to the NRP synthetase family.

The protein operates within siderophore biosynthesis. Its function is as follows. Nonribosomal peptide synthetase; part of the gene cluster that mediates the biosynthesis of hydroxamate-containing siderophores that play a critical role in virulence. Cochliobolus heterostrophus produces extracellular coprogen-type siderophores including coprogen, neocoprogen I and neocoprogen II, as well as the intracellular siderophore ferricrocin. The role of extracellular siderophores is to supply iron to the fungus during plant infection, and the intracellular ferricrocin is required for intracellular iron distribution and storage with a crucial role in ascus and ascospore development. SIDA2 catalyzes the conversion of L-ornithine to N(5)-hydroxyornithine, the first step in the biosynthesis of all hydroxamate-containing siderophores. The assembly of extracellular coprogen-type siderophores is then performed by the nonribosomal peptide synthetase (NRPS) NPS6 whereas the intracellular siderophore ferricrocin is assembled by NPS2. This Cochliobolus heterostrophus (strain C4 / ATCC 48331 / race T) (Southern corn leaf blight fungus) protein is Nonribosomal peptide synthetase 2.